Reading from the N-terminus, the 156-residue chain is Small ribosomal subunit protein eS19A (156 aa).

This sequence belongs to the eukaryotic ribosomal protein eS19 family.

The sequence is that of Small ribosomal subunit protein eS19A (RpS19a) from Drosophila melanogaster (Fruit fly).